The following is a 325-amino-acid chain: MEIEAVEKEAIEKLSKISNVQELESFRIEFLGKKGKITGLMKNLKNLPPEERPAYGKRVNELREKIEKLFEEKRQQIQRILEQEKMEKMRIDVTVPGARRKLGHSHPVLKVMEEIERIFVSMGFDVVEGPEIETTWHNFDALNTPEWHPARDEHDSFYITDDLLLRTHTSPVQIRTMLERKPPIAIISPGKVYRRDYDATHLPMFHQVEGLHVDRDLSVAHLKFTLEEFARRMFGEGAKVRLRPSFFPFTEPSFEVDVYLSGYGWLEILGAGMVDPNVFLNVGYDPEEWTGYAFGMGVERIAMLKYGIADIREFVRNDVRFLSSY.

Glu251 serves as a coordination point for Mg(2+).

It belongs to the class-II aminoacyl-tRNA synthetase family. Phe-tRNA synthetase alpha subunit type 1 subfamily. As to quaternary structure, tetramer of two alpha and two beta subunits. The cofactor is Mg(2+).

The protein resides in the cytoplasm. The catalysed reaction is tRNA(Phe) + L-phenylalanine + ATP = L-phenylalanyl-tRNA(Phe) + AMP + diphosphate + H(+). This is Phenylalanine--tRNA ligase alpha subunit (pheS) from Thermotoga maritima (strain ATCC 43589 / DSM 3109 / JCM 10099 / NBRC 100826 / MSB8).